The chain runs to 680 residues: DNA-directed RNA polymerase subunit beta' (680 aa).

4 residues coordinate Zn(2+): Cys-69, Cys-71, Cys-87, and Cys-90. 3 residues coordinate Mg(2+): Asp-489, Asp-491, and Asp-493.

Belongs to the RNA polymerase beta' chain family. RpoC1 subfamily. In plastids the minimal PEP RNA polymerase catalytic core is composed of four subunits: alpha, beta, beta', and beta''. When a (nuclear-encoded) sigma factor is associated with the core the holoenzyme is formed, which can initiate transcription. Requires Mg(2+) as cofactor. Zn(2+) serves as cofactor.

Its subcellular location is the plastid. It is found in the chloroplast. The enzyme catalyses RNA(n) + a ribonucleoside 5'-triphosphate = RNA(n+1) + diphosphate. In terms of biological role, DNA-dependent RNA polymerase catalyzes the transcription of DNA into RNA using the four ribonucleoside triphosphates as substrates. The chain is DNA-directed RNA polymerase subunit beta' from Arabidopsis thaliana (Mouse-ear cress).